The sequence spans 318 residues: Ribose-phosphate pyrophosphokinase 1 (318 aa).

96 to 101 (RQDKKD) contributes to the ATP binding site. D128, H130, D139, and D143 together coordinate Mg(2+). H130 lines the ATP pocket. Residues 212–227 (KDRVAILVDDMADTCG) are binding of phosphoribosylpyrophosphate.

The protein belongs to the ribose-phosphate pyrophosphokinase family. Homodimer. The active form is probably a hexamer composed of 3 homodimers. The cofactor is Mg(2+).

It catalyses the reaction D-ribose 5-phosphate + ATP = 5-phospho-alpha-D-ribose 1-diphosphate + AMP + H(+). Its pathway is metabolic intermediate biosynthesis; 5-phospho-alpha-D-ribose 1-diphosphate biosynthesis; 5-phospho-alpha-D-ribose 1-diphosphate from D-ribose 5-phosphate (route I): step 1/1. With respect to regulation, activated by magnesium and inorganic phosphate. In terms of biological role, catalyzes the synthesis of phosphoribosylpyrophosphate (PRPP) that is essential for nucleotide synthesis. This Bos taurus (Bovine) protein is Ribose-phosphate pyrophosphokinase 1 (PRPS1).